The chain runs to 250 residues: ATP synthase subunit a (250 aa).

6 consecutive transmembrane segments (helical) span residues 29-49 (ASLF…FATS), 84-104 (FFPL…LGMF), 114-134 (IIVT…YGFY), 143-163 (VFVP…IEII), 193-213 (FVAS…LPLI), and 216-236 (VALT…FAVL).

It belongs to the ATPase A chain family. F-type ATPases have 2 components, CF(1) - the catalytic core - and CF(0) - the membrane proton channel. CF(1) has five subunits: alpha(3), beta(3), gamma(1), delta(1), epsilon(1). CF(0) has three main subunits: a(1), b(2) and c(9-12). The alpha and beta chains form an alternating ring which encloses part of the gamma chain. CF(1) is attached to CF(0) by a central stalk formed by the gamma and epsilon chains, while a peripheral stalk is formed by the delta and b chains.

The protein resides in the cell inner membrane. Its function is as follows. Key component of the proton channel; it plays a direct role in the translocation of protons across the membrane. This Rhizobium etli (strain CIAT 652) protein is ATP synthase subunit a.